A 274-amino-acid polypeptide reads, in one-letter code: 2,3,4,5-tetrahydropyridine-2,6-dicarboxylate N-succinyltransferase (274 aa).

Substrate contacts are provided by Arg104 and Asp141.

Belongs to the transferase hexapeptide repeat family. In terms of assembly, homotrimer.

The protein localises to the cytoplasm. It catalyses the reaction (S)-2,3,4,5-tetrahydrodipicolinate + succinyl-CoA + H2O = (S)-2-succinylamino-6-oxoheptanedioate + CoA. The protein operates within amino-acid biosynthesis; L-lysine biosynthesis via DAP pathway; LL-2,6-diaminopimelate from (S)-tetrahydrodipicolinate (succinylase route): step 1/3. The sequence is that of 2,3,4,5-tetrahydropyridine-2,6-dicarboxylate N-succinyltransferase from Enterobacter sp. (strain 638).